A 290-amino-acid chain; its full sequence is MSFDVRRFDIYRKVPKDLTQPTYTGAFISICCCVFMLFLFLSELTGFIATEIVNELYVDDPDKDSGGKIDVSLNISLPNLHCDLVGLDIQDEMGRHEVGHIENSMKVPLNNGHGCRFEGEFSINKVPGNFHVSTHSATAQPQSPDMTHIIHKLAFGAKLQVQHVQGAFNALGGADRLQSNALASHDYILKIVPTVYEELGGKQRFSYQYTVANKEYVAYSHTGRIIPAIWFRYDLSPITVKYTERRRPFYRFITTICAIIGGTFTVAGIIDSCIFTASEAWKKIQIGKMS.

Residues 1–27 are Cytoplasmic-facing; sequence MSFDVRRFDIYRKVPKDLTQPTYTGAF. Residues 28–48 traverse the membrane as a helical segment; sequence ISICCCVFMLFLFLSELTGFI. The Lumenal segment spans residues 49–254; the sequence is ATEIVNELYV…RRRPFYRFIT (206 aa). Residue N74 is glycosylated (N-linked (GlcNAc...) asparagine). The helical transmembrane segment at 255–275 threads the bilayer; it reads TICAIIGGTFTVAGIIDSCIF. Topologically, residues 276–290 are cytoplasmic; that stretch reads TASEAWKKIQIGKMS.

This sequence belongs to the ERGIC family.

Its subcellular location is the endoplasmic reticulum membrane. The protein resides in the endoplasmic reticulum-Golgi intermediate compartment membrane. It is found in the golgi apparatus membrane. Functionally, possible role in transport between endoplasmic reticulum and Golgi. This is Endoplasmic reticulum-Golgi intermediate compartment protein 1 (ergic1) from Danio rerio (Zebrafish).